The primary structure comprises 355 residues: NADH dehydrogenase [ubiquinone] 1 alpha subcomplex subunit 10, mitochondrial (355 aa).

The N-terminal 35 residues, 1–35 (MALRLLRLVPASASARGLAAGAQRVGRIHTSVHCK), are a transit peptide targeting the mitochondrion. N6-acetyllysine; alternate is present on lysine 122. Lysine 122 carries the N6-succinyllysine; alternate modification. A Phosphoserine; by PINK1 modification is found at serine 250. Lysine 285 carries the N6-succinyllysine modification.

This sequence belongs to the complex I NDUFA10 subunit family. As to quaternary structure, complex I is composed of 45 different subunits. This a component of the hydrophobic protein fraction. Requires FAD as cofactor. Phosphorylation at Ser-250 by PINK1 is required for the binding and/or reduction of the complex I substrate ubiquinone. As to expression, expressed in the head and flagellum of epididymal sperm but not in testicular sperm (at protein level).

It is found in the mitochondrion matrix. Accessory subunit of the mitochondrial membrane respiratory chain NADH dehydrogenase (Complex I), that is believed not to be involved in catalysis. Complex I functions in the transfer of electrons from NADH to the respiratory chain. The immediate electron acceptor for the enzyme is believed to be ubiquinone. In Rattus norvegicus (Rat), this protein is NADH dehydrogenase [ubiquinone] 1 alpha subcomplex subunit 10, mitochondrial (Ndufa10).